The following is a 1388-amino-acid chain: Rho-associated protein kinase 2 (1388 aa).

The segment at 1–27 is disordered; that stretch reads MSRPPPTGKMPGAPETAPGDGAGASRQ. In terms of domain architecture, Protein kinase spans 92–354; it reads YDVVKVIGRG…VEEIRQHPFF (263 aa). ATP contacts are provided by residues 98–106 and K121; that span reads IGRGAFGEV. D214 acts as the Proton acceptor in catalysis. One can recognise an AGC-kinase C-terminal domain in the interval 357-425; sequence DQWHWDNIRE…YRENLLLSDS (69 aa). The interaction with PPP1R12A stretch occupies residues 363–784; sequence NIRETAAPVV…INELLKQKDV (422 aa). An interaction with NPM1 region spans residues 373–420; the sequence is PELSSDIDSSNFDDIEDDKGDVETFPIPKAFVGNQLPFIGFTYYRENL. Residue T414 is modified to Phosphothreonine; by ROCK2. Coiled-coil stretches lie at residues 429 to 1024 and 1053 to 1131; these read RETD…EKQL and DTDV…IGLD. Residues 497–573 enclose the REM-1 domain; sequence ALRQLEREKA…LDETNALLRT (77 aa). Y722 carries the post-translational modification Phosphotyrosine; by SRC. The region spanning 979 to 1047 is the RhoBD domain; sequence TSDVANLANE…LAEIMNRKEP (69 aa). The tract at residues 979-1047 is RHOA binding; it reads TSDVANLANE…LAEIMNRKEP (69 aa). A Phosphoserine modification is found at S1137. A PH domain is found at 1150–1349; sequence ESRLEGWLSL…WVSRLVKKIP (200 aa). T1212 is modified (phosphothreonine). The segment at 1260–1315 adopts a Phorbol-ester/DAG-type zinc-finger fold; sequence GHEFIPTLYHFPTNCEACMKPLWHMFKPPPALECRRCHIKCHKDHMDKKEEIIAPC. Residues 1345–1388 form a disordered region; it reads VKKIPKKPPAPDPFARSSPRTSMKIQQNQSIRRPSRQLAPNKPS. Phosphoserine occurs at positions 1362 and 1374. Polar residues predominate over residues 1362-1376; sequence SPRTSMKIQQNQSIR.

Belongs to the protein kinase superfamily. AGC Ser/Thr protein kinase family. Homodimer. Interacts with IRS1. Interacts with RAF1. Interacts with RHOA (activated by GTP), RHOB and RHOC. Interacts with PPP1R12A. Interacts with EP300. Interacts with CHORDC1. Interacts with BRCA2. Interacts with NPM1; this interaction enhances ROCK2 activity. Interacts with SORL1. Interacts with PJVK. Mg(2+) serves as cofactor. Post-translationally, phosphorylation at Tyr-722 reduces its binding to RHOA and is crucial for focal adhesion dynamics. Dephosphorylation by PTPN11 stimulates its RHOA binding activity. Cleaved by granzyme B during apoptosis. This leads to constitutive activation of the kinase and membrane blebbing. Expressed in the brain (at protein level).

It localises to the cytoplasm. The protein localises to the cell membrane. The protein resides in the nucleus. Its subcellular location is the cytoskeleton. It is found in the microtubule organizing center. It localises to the centrosome. It catalyses the reaction L-seryl-[protein] + ATP = O-phospho-L-seryl-[protein] + ADP + H(+). The enzyme catalyses L-threonyl-[protein] + ATP = O-phospho-L-threonyl-[protein] + ADP + H(+). Its activity is regulated as follows. Activated by RHOA binding. Inhibited by Y-27632. Its function is as follows. Protein kinase which is a key regulator of actin cytoskeleton and cell polarity. Involved in regulation of smooth muscle contraction, actin cytoskeleton organization, stress fiber and focal adhesion formation, neurite retraction, cell adhesion and motility via phosphorylation of ADD1, BRCA2, CNN1, EZR, DPYSL2, EP300, MSN, MYL9/MLC2, NPM1, RDX, PPP1R12A and VIM. Phosphorylates SORL1 and IRF4. Acts as a negative regulator of VEGF-induced angiogenic endothelial cell activation. Positively regulates the activation of p42/MAPK1-p44/MAPK3 and of p90RSK/RPS6KA1 during myogenic differentiation. Plays an important role in the timely initiation of centrosome duplication. Inhibits keratinocyte terminal differentiation. May regulate closure of the eyelids and ventral body wall through organization of actomyosin bundles. Plays a critical role in the regulation of spine and synaptic properties in the hippocampus. Plays an important role in generating the circadian rhythm of the aortic myofilament Ca(2+) sensitivity and vascular contractility by modulating the myosin light chain phosphorylation. This chain is Rho-associated protein kinase 2 (ROCK2), found in Homo sapiens (Human).